The chain runs to 558 residues: Thermosome subunit alpha (558 aa).

The tract at residues 536-558 is disordered; that stretch reads TEKGKKEGGEGAGAETPGAPSLE. Low complexity predominate over residues 548–558; sequence GAETPGAPSLE.

The protein belongs to the TCP-1 chaperonin family. In terms of assembly, forms a Heterooligomeric complex of two stacked eight-membered rings.

Its function is as follows. Molecular chaperone; binds unfolded polypeptides in vitro, and has a weak ATPase activity. The sequence is that of Thermosome subunit alpha (thsA) from Sulfolobus acidocaldarius (strain ATCC 33909 / DSM 639 / JCM 8929 / NBRC 15157 / NCIMB 11770).